The primary structure comprises 265 residues: Mlc titration factor A (265 aa).

4 residues coordinate Zn(2+): H111, H148, H152, and E211.

It belongs to the MtfA family. In terms of assembly, interacts with Mlc. Zn(2+) is required as a cofactor.

The protein localises to the cytoplasm. Involved in the modulation of the activity of the glucose-phosphotransferase system (glucose-PTS). Interacts with the transcriptional repressor Mlc, preventing its interaction with DNA and leading to the modulation of expression of genes regulated by Mlc, including ptsG, which encodes the PTS system glucose-specific EIICB component. Functionally, shows zinc-dependent metallopeptidase activity. The chain is Mlc titration factor A from Escherichia coli (strain UTI89 / UPEC).